Reading from the N-terminus, the 235-residue chain is Motile sperm domain-containing protein 3 (235 aa).

Disordered stretches follow at residues 1-30 and 143-170; these read MRRG…PSGP and ELQG…PFPE. The MSP domain occupies 33-145; sequence PVLVFPPDLV…RAPAYPLELQ (113 aa). Helical transmembrane passes span 180–200 and 213–233; these read SFLL…LPLQ and VSLG…MVFL.

The protein resides in the membrane. The protein is Motile sperm domain-containing protein 3 (MOSPD3) of Bos taurus (Bovine).